The primary structure comprises 349 residues: S-adenosylmethionine:tRNA ribosyltransferase-isomerase (349 aa).

The protein belongs to the QueA family. As to quaternary structure, monomer.

The protein localises to the cytoplasm. The catalysed reaction is 7-aminomethyl-7-carbaguanosine(34) in tRNA + S-adenosyl-L-methionine = epoxyqueuosine(34) in tRNA + adenine + L-methionine + 2 H(+). The protein operates within tRNA modification; tRNA-queuosine biosynthesis. In terms of biological role, transfers and isomerizes the ribose moiety from AdoMet to the 7-aminomethyl group of 7-deazaguanine (preQ1-tRNA) to give epoxyqueuosine (oQ-tRNA). The chain is S-adenosylmethionine:tRNA ribosyltransferase-isomerase from Pseudomonas putida (strain W619).